The chain runs to 317 residues: Adenosine receptor A3 (317 aa).

Over 1 to 14 the chain is Extracellular; it reads MPVNSTAVSLASVT. An N-linked (GlcNAc...) asparagine glycan is attached at N4. Residues 15–37 form a helical membrane-spanning segment; the sequence is YISVEILIGLCAIVGNVLVIWVV. Residues 38–48 are Cytoplasmic-facing; that stretch reads KLNPSLQTTTF. The helical transmembrane segment at 49-72 threads the bilayer; that stretch reads YFIVSLALADIAVGVLVMPLAIVI. At 73 to 84 the chain is on the extracellular side; sequence SLGVTIHFYSCL. A disulfide bridge links C83 with C165. The helical transmembrane segment at 85-106 threads the bilayer; that stretch reads LMTCLLMIFTHASIMSLLAIAV. At 107–126 the chain is on the cytoplasmic side; that stretch reads DRYLRVKLTVRYRRVTTQRR. The helical transmembrane segment at 127 to 148 threads the bilayer; that stretch reads IWLALGLCWLVSFLVGLTPMFG. The Extracellular portion of the chain corresponds to 149–176; that stretch reads WNMKLSSADKNLTFLPCQFRSVMRMDYM. A helical membrane pass occupies residues 177-197; sequence VYFSFFTWILIPLVVMCAIYF. The Cytoplasmic segment spans residues 198–230; sequence DIFYVIRNRLSQNFSGSKETGAFYGREFKTAKS. A helical membrane pass occupies residues 231–254; the sequence is LSLVLFLFALSWLPLSIINCIIYF. The Extracellular portion of the chain corresponds to 255–260; the sequence is NGEVPQ. The chain crosses the membrane as a helical span at residues 261 to 283; that stretch reads IVLYLGILLSHANSMMNPIVYAY. The Cytoplasmic segment spans residues 284–317; sequence KIKKFKETYLLILKACVICQPSKSMDPSIEQTSE. C302 carries the S-palmitoyl cysteine lipid modification.

This sequence belongs to the G-protein coupled receptor 1 family. Phosphorylation on Thr-315 and Ser-316 may be crucial for rapid desensitization. Phosphorylation on Thr-315 may be necessary for phosphorylation on Ser-316 to occur.

It is found in the cell membrane. Its function is as follows. Receptor for adenosine. The activity of this receptor is mediated by G proteins which inhibits adenylyl cyclase. This chain is Adenosine receptor A3 (ADORA3), found in Bos taurus (Bovine).